Reading from the N-terminus, the 360-residue chain is Holliday junction branch migration complex subunit RuvB (360 aa).

The large ATPase domain (RuvB-L) stretch occupies residues 4–196; the sequence is HEEDLDQAEE…FGFTAHLEFY (193 aa). Residues leucine 35, arginine 36, glycine 77, lysine 80, threonine 81, threonine 82, 143–145, arginine 186, tyrosine 196, and arginine 233 contribute to the ATP site; that span reads EDF. Threonine 81 provides a ligand contact to Mg(2+). Residues 197-267 form a small ATPAse domain (RuvB-S) region; it reads EPDELDLIVQ…VAQDALDLYE (71 aa). Residues 270–360 are head domain (RuvB-H); it reads QLGLDRLDRG…PESDPPLFED (91 aa). Residues arginine 306, arginine 325, and arginine 330 each contribute to the DNA site.

It belongs to the RuvB family. Homohexamer. Forms an RuvA(8)-RuvB(12)-Holliday junction (HJ) complex. HJ DNA is sandwiched between 2 RuvA tetramers; dsDNA enters through RuvA and exits via RuvB. An RuvB hexamer assembles on each DNA strand where it exits the tetramer. Each RuvB hexamer is contacted by two RuvA subunits (via domain III) on 2 adjacent RuvB subunits; this complex drives branch migration. In the full resolvosome a probable DNA-RuvA(4)-RuvB(12)-RuvC(2) complex forms which resolves the HJ.

The protein resides in the cytoplasm. It catalyses the reaction ATP + H2O = ADP + phosphate + H(+). The RuvA-RuvB-RuvC complex processes Holliday junction (HJ) DNA during genetic recombination and DNA repair, while the RuvA-RuvB complex plays an important role in the rescue of blocked DNA replication forks via replication fork reversal (RFR). RuvA specifically binds to HJ cruciform DNA, conferring on it an open structure. The RuvB hexamer acts as an ATP-dependent pump, pulling dsDNA into and through the RuvAB complex. RuvB forms 2 homohexamers on either side of HJ DNA bound by 1 or 2 RuvA tetramers; 4 subunits per hexamer contact DNA at a time. Coordinated motions by a converter formed by DNA-disengaged RuvB subunits stimulates ATP hydrolysis and nucleotide exchange. Immobilization of the converter enables RuvB to convert the ATP-contained energy into a lever motion, pulling 2 nucleotides of DNA out of the RuvA tetramer per ATP hydrolyzed, thus driving DNA branch migration. The RuvB motors rotate together with the DNA substrate, which together with the progressing nucleotide cycle form the mechanistic basis for DNA recombination by continuous HJ branch migration. Branch migration allows RuvC to scan DNA until it finds its consensus sequence, where it cleaves and resolves cruciform DNA. The protein is Holliday junction branch migration complex subunit RuvB of Nocardioides sp. (strain ATCC BAA-499 / JS614).